Here is a 1148-residue protein sequence, read N- to C-terminus: MSYPGNVHSLRDLYNVFKDAPNRERLILDMNSQLARIDNIAQILTMTEEQEKEVIAKMSASLANLGLNMDNAIRELKNMETVHMDRVSVLTVYQSAVLNITNNTHTISDSMKSIMYDLSGYVNTTIYPTIQSPATEDRSSLIPLNYKNMKNIFDDKHTIVFATVIGPQCVDFTTEDVTNISWIVDSHEIIKITYYPSSLIMETSIVGNRYLQYQLSLSNQTIDEYDNNGPYSCLLVFCVVGANGLLDIYSMSSQQVRKYVNDYEVGESSLIGYSTKHGSLHLSSNDIRNISHELSGSPYIDVRVTYSITAAFPDSQLLSMLLDNIQQSLGTLTACESKSFDDAYRAAMDNQFTKADVLTSSIITMRSSLNSLISSSPLLSDDTIRIVDDCTFQLASALTLTNEFASDSANLLGTFKVKQTTIDRYSNTKISEGKAVYLSPTLATMNVHSGSVVVSTDSFHNNNALKVMLLAPGLVKPDNVNFDLLSVKSNNVIDLVSDYKLDDAIIQFTDQPDYSSTTSIANAKSVVYMKTTGCIGLTYSNPNELILNMSLQLNSAAPSLGGVVNNNTTFSLTIGSTIINYVTDFEITDFTDSSGKQSLKLTSSVNLLTKLSVDMIFYAVSINAGGVIATDTHKYTDTGFDSSNYTYGWEMYDSAALNDYQDMTVVTPPKFTAKMLRPQDASKLNGDCVGGTYKKGRNILVIAGNRIFYNGVSVYFKMQKNSMISLKYFINPSGLSTVDTCDVRITRNAAFLTQIDTKLMSVQSVLNDVQRRIDIINQLMQPSRIQTLATIIQGIGGVVSLAMPLLGAIVVTIGAIVSIADPNHHGVDYQAVLNAFHSWCQYAVVARMNYGLLKADDPKLDILKRISDGSVNTFRNKPKKITLPGIDDEVIRGTSTDYIDTGINVRYNSMGLFGEGKLEEWMANTALKVQDGTANIFQKNLFSLLQKRKIVPMHARVEIIQTEKIGDVYRNTILYAGINEGSYIENSVYLTRSGNTRIKRLNMTSGPGMFKAVTESTTEVGNFKAVDWTLSGMTKEEIYNAAGLMYPNKNPAHSEVQDVYESVIRDMAEIDDTWVLQHHKTVMLPGQIEAFEHLIRVSANKFQYAFIGSNCQNFADDVVGILSQFKRPKRWVDENDFKQYIQSIYDEL.

The region spanning 930-1148 (QDGTANIFQK…QYIQSIYDEL (219 aa)) is the PPPDE domain. Residues His-954 and Cys-1111 contribute to the active site.

The protein belongs to the phytoreovirus minor outer capsid protein P2 family.

The protein resides in the virion. Its subcellular location is the host cytoplasm. Its function is as follows. Minor capsid protein present in the outer capsid, which is required for adsorption of the virus onto host insect cells. In Nephotettix cincticeps (Green rice leafhopper), this protein is Minor outer capsid protein P2.